The sequence spans 273 residues: Putative phosphoenolpyruvate synthase regulatory protein (273 aa).

ADP is bound at residue 154-161 (GVSRSGKT).

It belongs to the pyruvate, phosphate/water dikinase regulatory protein family. PSRP subfamily.

The catalysed reaction is [pyruvate, water dikinase] + ADP = [pyruvate, water dikinase]-phosphate + AMP + H(+). The enzyme catalyses [pyruvate, water dikinase]-phosphate + phosphate + H(+) = [pyruvate, water dikinase] + diphosphate. Functionally, bifunctional serine/threonine kinase and phosphorylase involved in the regulation of the phosphoenolpyruvate synthase (PEPS) by catalyzing its phosphorylation/dephosphorylation. The chain is Putative phosphoenolpyruvate synthase regulatory protein from Neisseria meningitidis serogroup C (strain 053442).